The chain runs to 305 residues: L-lactate dehydrogenase (305 aa).

NAD(+)-binding positions include Val11, Asp32, Lys37, and 76–77 (GV). Substrate-binding positions include Gln79, Arg85, and 117-120 (NPVD). Residues 115–117 (ATN) and Ser140 contribute to the NAD(+) site. Substrate is bound at residue 145-148 (DTAR). Residues Arg150 and His165 each contribute to the beta-D-fructose 1,6-bisphosphate site. His172 functions as the Proton acceptor in the catalytic mechanism. A Phosphotyrosine modification is found at Tyr218. Thr227 serves as a coordination point for substrate.

This sequence belongs to the LDH/MDH superfamily. LDH family. In terms of assembly, homotetramer.

It is found in the cytoplasm. The catalysed reaction is (S)-lactate + NAD(+) = pyruvate + NADH + H(+). Its pathway is fermentation; pyruvate fermentation to lactate; (S)-lactate from pyruvate: step 1/1. With respect to regulation, allosterically activated by fructose 1,6-bisphosphate (FBP). In terms of biological role, catalyzes the conversion of lactate to pyruvate. The protein is L-lactate dehydrogenase of Chloroherpeton thalassium (strain ATCC 35110 / GB-78).